The following is a 263-amino-acid chain: Large ribosomal subunit protein uL29m (263 aa).

Disordered stretches follow at residues 51 to 92 (ARVT…EELP) and 208 to 263 (PEID…APRV). Residues 53 to 66 (VTRDNSKQRGESAL) are compositionally biased toward basic and acidic residues. Over residues 214–223 (NPENPYTPST) the composition is skewed to polar residues. Low complexity predominate over residues 233–245 (GAEASETQSTTTE). A compositionally biased stretch (polar residues) spans 246–257 (IDPTTIPSSKSQ).

It belongs to the universal ribosomal protein uL29 family. In terms of assembly, component of the mitochondrial large ribosomal subunit (mt-LSU). Mature N.crassa 74S mitochondrial ribosomes consist of a small (37S) and a large (54S) subunit. The 37S small subunit contains a 16S ribosomal RNA (16S mt-rRNA) and 32 different proteins. The 54S large subunit contains a 23S rRNA (23S mt-rRNA) and 42 different proteins.

It is found in the mitochondrion. Functionally, component of the mitochondrial ribosome (mitoribosome), a dedicated translation machinery responsible for the synthesis of mitochondrial genome-encoded proteins, including at least some of the essential transmembrane subunits of the mitochondrial respiratory chain. The mitoribosomes are attached to the mitochondrial inner membrane and translation products are cotranslationally integrated into the membrane. The polypeptide is Large ribosomal subunit protein uL29m (mrpl4) (Neurospora crassa (strain ATCC 24698 / 74-OR23-1A / CBS 708.71 / DSM 1257 / FGSC 987)).